The primary structure comprises 281 residues: 2,3,4,5-tetrahydropyridine-2,6-dicarboxylate N-succinyltransferase (281 aa).

Belongs to the transferase hexapeptide repeat family.

The protein resides in the cytoplasm. The catalysed reaction is (S)-2,3,4,5-tetrahydrodipicolinate + succinyl-CoA + H2O = (S)-2-succinylamino-6-oxoheptanedioate + CoA. The protein operates within amino-acid biosynthesis; L-lysine biosynthesis via DAP pathway; LL-2,6-diaminopimelate from (S)-tetrahydrodipicolinate (succinylase route): step 1/3. This chain is 2,3,4,5-tetrahydropyridine-2,6-dicarboxylate N-succinyltransferase, found in Methylobacterium sp. (strain 4-46).